We begin with the raw amino-acid sequence, 1451 residues long: ABC transporter G family member 32 (1451 aa).

Residues 162–435 (GNALHISPTR…FELMGFRCPQ (274 aa)) form the ABC transporter 1 domain. Position 195-202 (195-202 (GPPGSGKT)) interacts with ATP. An ABC transmembrane type-2 1 domain is found at 513-725 (ALLKANIDRE…AQNAISTNEF (213 aa)). 6 consecutive transmembrane segments (helical) span residues 531–551 (FVYIFKAANLTLTAFLVMTTF), 563–583 (GTIYMGALYFALDTIMFNGFA), 618–638 (IPVTFFEVGVYVFTTYYVVGF), 650–670 (LLLVALNQMSSSLFRFIAGIG), 674–694 (VVSQTFGPLSLLAFTALGGFI), and 760–780 (IGFGALIGYTLLFNLLYTVAL). The interval 809–835 (ILDSCEEKKSRKKEQSQSVNQKHWNNT) is disordered. Basic and acidic residues predominate over residues 813 to 823 (CEEKKSRKKEQ). Residues 853-1105 (LSFNDIKYSV…KLIEYFEGIE (253 aa)) enclose the ABC transporter 2 domain. 898–905 (GVSGAGKT) lines the ATP pocket. One can recognise an ABC transmembrane type-2 2 domain in the interval 1178 to 1392 (TQCIACLWKH…TLYGLVASQF (215 aa)). Helical transmembrane passes span 1197-1217 (YTAVRLLFTIIIALLFGTMFW), 1237-1257 (YAAVLYIGIQNSGCVQPVVVV), 1285-1305 (LPYILVQTLVYGVLVYSMIGF), 1312-1332 (FIWYLFFMYFTLLYFTFFGMM), 1342-1362 (IAAIISPAIYNAWNLFSGYLI), 1373-1393 (WYCWICPVAWTLYGLVASQFG), and 1423-1443 (LVAVVHVVFTVMFAFLFSFAI).

Belongs to the ABC transporter superfamily. ABCG family. PDR (TC 3.A.1.205) subfamily.

The protein resides in the membrane. Functionally, may be a general defense protein. This is ABC transporter G family member 32 from Oryza sativa subsp. japonica (Rice).